Reading from the N-terminus, the 156-residue chain is MLNRTILVGRLTRDPELRTTQSGVNVASFTLAVNRTFTNAQGEREADFINIIVFKKQAENVNKYLSKGSLAGVDGRLQTRNYENKEGQRVYVTEVVADSIQFLEPKNSNDTQQDLYQQQVQQTRGQSQYSNNKPVKDNPFANANGPIELNDDDLPF.

One can recognise an SSB domain in the interval 1 to 104; it reads MLNRTILVGR…VVADSIQFLE (104 aa). The disordered stretch occupies residues 104–156; it reads EPKNSNDTQQDLYQQQVQQTRGQSQYSNNKPVKDNPFANANGPIELNDDDLPF. Residues 112 to 128 show a composition bias toward low complexity; it reads QQDLYQQQVQQTRGQSQ. The Important for interaction with partner proteins motif lies at 151–156; that stretch reads DDDLPF.

Homotetramer.

Its function is as follows. Plays an important role in DNA replication, recombination and repair. Binds to ssDNA and to an array of partner proteins to recruit them to their sites of action during DNA metabolism. The polypeptide is Single-stranded DNA-binding protein (ssb) (Staphylococcus aureus (strain MRSA252)).